Consider the following 440-residue polypeptide: Chorismate synthase 1, chloroplastic (440 aa).

A chloroplast-targeting transit peptide spans 1–54; sequence MASFVPTKQFVGASSSSDIGSSRLVSLQLPSKFSSSNFHLPSRPSQLKRLEIQA. The disordered stretch occupies residues 100-147; it reads RRRPGQSRITTPRKETDTCKISSGTADGLTTGSPIKVEVPNTDQRGND. Polar residues predominate over residues 118 to 132; that stretch reads CKISSGTADGLTTGS.

It belongs to the chorismate synthase family. In terms of assembly, homotetramer. Requires FMNH2 as cofactor. In terms of tissue distribution, predominantly expressed in flowers and roots and, to a lesser extent, in stems, leaves, and cotyledons.

It is found in the plastid. The protein localises to the chloroplast. It catalyses the reaction 5-O-(1-carboxyvinyl)-3-phosphoshikimate = chorismate + phosphate. Its pathway is metabolic intermediate biosynthesis; chorismate biosynthesis; chorismate from D-erythrose 4-phosphate and phosphoenolpyruvate: step 7/7. Functionally, catalyzes the last common step of the biosynthesis of aromatic amino acids, produced via the shikimic acid pathway. In Solanum lycopersicum (Tomato), this protein is Chorismate synthase 1, chloroplastic (CS1).